The primary structure comprises 644 residues: Anti-sigma-I factor RsgI3 (644 aa).

The Cytoplasmic segment spans residues 1–56 (MDNIGVIIKIEGNEAIVMTDDCSFKKVPIKDGMHPGQKILVPNNEVIQKENKSIKR). In terms of domain architecture, RsgI N-terminal anti-sigma spans 3 to 50 (NIGVIIKIEGNEAIVMTDDCSFKKVPIKDGMHPGQKILVPNNEVIQKE). The helical transmembrane segment at 57 to 77 (ISAVATGIAAVFLMVLSLIWI) threads the bilayer. The Extracellular segment spans residues 78-644 (NKPGRPDGIY…VVPSKNLFAD (567 aa)). Polar residues predominate over residues 302–328 (PTNTPSISTKPSATPAENPTPKLTQKP). The interval 302 to 359 (PTNTPSISTKPSATPAENPTPKLTQKPTPVPAKTGERTSTTPTPTPAPTVRNGTGSGL) is disordered. 2 consecutive PA14 domains span residues 354 to 491 (GTGS…PSSQ) and 502 to 640 (KDVN…PSKN).

As to quaternary structure, interacts (via RsgI N-terminal anti-sigma domain) with SigI3.

It localises to the cell membrane. Anti-sigma factor for SigI3. Negatively regulates SigI3 activity through direct interaction. Binding of the polysaccharide substrate to the extracellular C-terminal sensing domain of RsgI3 may induce a conformational change in its N-terminal cytoplasmic region, leading to the release and activation of SigI3. This chain is Anti-sigma-I factor RsgI3, found in Acetivibrio thermocellus (strain ATCC 27405 / DSM 1237 / JCM 9322 / NBRC 103400 / NCIMB 10682 / NRRL B-4536 / VPI 7372) (Clostridium thermocellum).